We begin with the raw amino-acid sequence, 459 residues long: Exodeoxyribonuclease 7 large subunit (459 aa).

Belongs to the XseA family. In terms of assembly, heterooligomer composed of large and small subunits.

It is found in the cytoplasm. It catalyses the reaction Exonucleolytic cleavage in either 5'- to 3'- or 3'- to 5'-direction to yield nucleoside 5'-phosphates.. Its function is as follows. Bidirectionally degrades single-stranded DNA into large acid-insoluble oligonucleotides, which are then degraded further into small acid-soluble oligonucleotides. The polypeptide is Exodeoxyribonuclease 7 large subunit (Yersinia pseudotuberculosis serotype O:3 (strain YPIII)).